A 204-amino-acid chain; its full sequence is Large ribosomal subunit protein eL15 (204 aa).

This sequence belongs to the eukaryotic ribosomal protein eL15 family. In terms of assembly, component of the large ribosomal subunit.

The protein resides in the cytoplasm. Functionally, component of the large ribosomal subunit. The ribosome is a large ribonucleoprotein complex responsible for the synthesis of proteins in the cell. This Anguilla japonica (Japanese eel) protein is Large ribosomal subunit protein eL15 (rpl15).